Consider the following 344-residue polypeptide: Golgi-associated RAB2 interactor protein 1B (344 aa).

A disordered region spans residues 271 to 293 (FRSSRKVETNKNSSGKDSSREDS).

The protein belongs to the GARIN family.

Its subcellular location is the golgi apparatus. Functionally, RAB2B effector protein required for accurate acrosome formation and normal male fertility. In complex with RAB2A/RAB2B, seems to suppress excessive vesicle trafficking during acrosome formation. The polypeptide is Golgi-associated RAB2 interactor protein 1B (Homo sapiens (Human)).